A 242-amino-acid polypeptide reads, in one-letter code: Type III pantothenate kinase (242 aa).

ATP is bound at residue 5–12 (DLGNTRLK). Substrate-binding positions include Y94 and 100-103 (GCDR). The Proton acceptor role is filled by D102. Position 124 (T124) interacts with ATP. Substrate is bound at residue T175.

Belongs to the type III pantothenate kinase family. As to quaternary structure, homodimer. Requires NH4(+) as cofactor. K(+) serves as cofactor.

It localises to the cytoplasm. The catalysed reaction is (R)-pantothenate + ATP = (R)-4'-phosphopantothenate + ADP + H(+). It participates in cofactor biosynthesis; coenzyme A biosynthesis; CoA from (R)-pantothenate: step 1/5. Its function is as follows. Catalyzes the phosphorylation of pantothenate (Pan), the first step in CoA biosynthesis. This chain is Type III pantothenate kinase, found in Psychrobacter cryohalolentis (strain ATCC BAA-1226 / DSM 17306 / VKM B-2378 / K5).